Consider the following 707-residue polypeptide: MGKSSKKSAVEVAPTSVSVSEGKSGKKGKRNAEDEIEKAVSAKKQKTVREKVVPSKEEAKKVKKQPPPKKVESSSSEEDSSESEEEVKAQPKKTVQPKKAAQPAKEESSDDSSDDSSSDDEPAKKPVARPNKAALSTNSSSSDDSSDESLSDDEPVKKPAAPLKKPVALATNGSKKVETDSSSSDSSSDEESDEDDKKTAAPVKKPSVAAIQKKTQESDSSDSDSDSESDEDVPTKAPAVAKKKEESSESSDSESDSDSDDEAAAVKKEEESSDSSDSDSESESDSDEPAKPTIPAKRPLTKDTKKGQSKDESEDSSDESSEESGDEPPQKKIKDSTTSGTTKPSPKATKKEISSDDESDEDDSSDESSDEDVKQKQTQAKKQAPVAQESSSSDESSEEDSDMESDEPAKTPQKKETAVSVGSNKSATKPGQEEPKTPASNQNQATGSKTLFVGNLPYNVEQEQVKQFFQEAGEVVDIRFSTFEDGNFRGFGHVEFATAEAAKKALELAGHDLMGRPVRLDLARERGAYTPGSGRDNSSFKKPAQSSGNTIFIKGFDTSLDIHQIRNSLEEHFGSCGEITRVSIPKDYETGASKGMAYMDFADNGSLSKAYELNGSDLGGYSLYVDEARPRPDNNREGGFSGGRDFNSSGRGGRRGGRGDGSRGRGDRGRGRGFGRGDRGHGGRGTPFKQSAGTPSAGKKTTFGDDD.

A disordered region spans residues 1-446 (MGKSSKKSAV…TPASNQNQAT (446 aa)). 2 stretches are compositionally biased toward basic and acidic residues: residues 30–40 (RNAEDEIEKAV) and 47–60 (TVRE…EEAK). 3 stretches are compositionally biased toward acidic residues: residues 75-85 (SSEEDSSESEE), 108-120 (SSDD…SSDD), and 144-153 (DSSDESLSDD). Over residues 158 to 170 (KPAAPLKKPVALA) the composition is skewed to low complexity. 3 stretches are compositionally biased toward acidic residues: residues 219-232 (DSSD…SDED), 248-263 (SESS…DDEA), and 271-287 (ESSD…SDSD). The segment covering 300–311 (LTKDTKKGQSKD) has biased composition (basic and acidic residues). Residues 312–326 (ESEDSSDESSEESGD) are compositionally biased toward acidic residues. Low complexity predominate over residues 336 to 347 (STTSGTTKPSPK). Over residues 355-370 (SDDESDEDDSSDESSD) the composition is skewed to acidic residues. The segment covering 376–394 (KQTQAKKQAPVAQESSSSD) has biased composition (low complexity). Positions 395–406 (ESSEEDSDMESD) are enriched in acidic residues. Positions 407–417 (EPAKTPQKKET) are enriched in basic and acidic residues. The span at 420 to 429 (SVGSNKSATK) shows a compositional bias: polar residues. In terms of domain architecture, RRM 1 spans 449–525 (KTLFVGNLPY…RPVRLDLARE (77 aa)). Disordered regions lie at residues 527-546 (GAYT…PAQS) and 629-707 (RPRP…GDDD). The RRM 2 domain maps to 549-630 (NTIFIKGFDT…YSLYVDEARP (82 aa)). Residues 657 to 681 (GRGDGSRGRGDRGRGRGFGRGDRGH) show a composition bias toward basic and acidic residues.

The protein resides in the nucleus. Its subcellular location is the nucleolus. Its function is as follows. Involved in pre-rRNA processing and ribosome assembly. The chain is Nucleolin 2 from Oryza sativa subsp. japonica (Rice).